A 382-amino-acid chain; its full sequence is Pectinesterase (382 aa).

Residues 1–16 (MKIIVLLLLAVVLASA) form the signal peptide. Cysteines 153 and 164 form a disulfide. N-linked (GlcNAc...) asparagine glycosylation occurs at N179. Q193 contacts substrate. D216 (proton donor) is an active-site residue. D242 serves as the catalytic Nucleophile. Substrate contacts are provided by R306 and W308. N340 and N376 each carry an N-linked (GlcNAc...) asparagine glycan.

It belongs to the pectinesterase family. As to expression, expressed throughout the midgut with particularly strong expression in the ventriculus.

It is found in the secreted. The enzyme catalyses [(1-&gt;4)-alpha-D-galacturonosyl methyl ester](n) + n H2O = [(1-&gt;4)-alpha-D-galacturonosyl](n) + n methanol + n H(+). It participates in glycan metabolism; pectin degradation; 2-dehydro-3-deoxy-D-gluconate from pectin: step 1/5. Pectinesterase which probably plays an important role in the digestion of plant cell walls. This is Pectinesterase from Sitophilus oryzae (Rice weevil).